The following is a 721-amino-acid chain: Dipeptidyl-peptidase 5 (721 aa).

The signal sequence occupies residues 1 to 18 (MGAFRWLSIAAAASTALA). Asn75, Asn94, Asn151, and Asn254 each carry an N-linked (GlcNAc...) asparagine glycan. The disordered stretch occupies residues 271 to 297 (ARPINGPDSPGTPKGIKGDSSSPVFSP). Asn380 and Asn450 each carry an N-linked (GlcNAc...) asparagine glycan. The Charge relay system role is filled by Ser560. An N-linked (GlcNAc...) asparagine glycan is attached at Asn607. Residues Asp643 and His675 each act as charge relay system in the active site.

This sequence belongs to the peptidase S9C family. In terms of processing, N-glycosylated. In terms of tissue distribution, expressed in mycelia and conidia.

The protein localises to the secreted. May be involved in metabolism of dipeptides or may affect host defense mechanisms. Has a substrate specificity limited to the hydrolysis of X-Ala, His-Ser, and Ser-Tyr dipeptides at a neutral pH optimum. This Aspergillus fumigatus (strain ATCC MYA-4609 / CBS 101355 / FGSC A1100 / Af293) (Neosartorya fumigata) protein is Dipeptidyl-peptidase 5.